We begin with the raw amino-acid sequence, 140 residues long: Iron sulfur cluster assembly protein 1 (140 aa).

This sequence belongs to the NifU family. Component of the core Fe-S cluster (ISC) assembly machinery. [2Fe-2S] cluster serves as cofactor.

It localises to the mitosome matrix. The protein operates within cofactor biosynthesis; iron-sulfur cluster biosynthesis. In terms of biological role, scaffold protein for the de novo synthesis of iron-sulfur (Fe-S) clusters within mitosomes, which is required for maturation of both [2Fe-2S] and [4Fe-4S] proteins. First, a [2Fe-2S] cluster is transiently assembled on the scaffold protein ISU1. In a second step, the cluster is released from ISU1, transferred to a glutaredoxin, followed by the formation of [2Fe-2S] proteins, the synthesis of [4Fe-4S] clusters and their target-specific insertion into the recipient apoproteins. Cluster assembly on ISU1 depends on the function of the cysteine desulfurase complex NFS1-ISD11, which serves as the sulfur donor for cluster synthesis, the iron-binding protein frataxin as the putative iron donor, and the electron transfer chain comprised of ferredoxin reductase and ferredoxin, which receive their electrons from NADH. This Encephalitozoon cuniculi (strain GB-M1) (Microsporidian parasite) protein is Iron sulfur cluster assembly protein 1 (ISU1).